We begin with the raw amino-acid sequence, 391 residues long: 3-ketoacyl-CoA thiolase (391 aa).

Cysteine 95 functions as the Acyl-thioester intermediate in the catalytic mechanism. Residues histidine 347 and cysteine 377 each act as proton acceptor in the active site.

The protein belongs to the thiolase-like superfamily. Thiolase family. Heterotetramer of two alpha chains (FadB) and two beta chains (FadA).

It is found in the cytoplasm. The catalysed reaction is an acyl-CoA + acetyl-CoA = a 3-oxoacyl-CoA + CoA. It functions in the pathway lipid metabolism; fatty acid beta-oxidation. Catalyzes the final step of fatty acid oxidation in which acetyl-CoA is released and the CoA ester of a fatty acid two carbons shorter is formed. This is 3-ketoacyl-CoA thiolase from Pseudomonas fragi.